The primary structure comprises 465 residues: ATP synthase subunit beta 2 (465 aa).

Residue 148–155 coordinates ATP; that stretch reads GGAGVGKT.

The protein belongs to the ATPase alpha/beta chains family. As to quaternary structure, F-type ATPases have 2 components, CF(1) - the catalytic core - and CF(0) - the membrane proton channel. CF(1) has five subunits: alpha(3), beta(3), gamma(1), delta(1), epsilon(1). CF(0) has three main subunits: a(1), b(2) and c(9-12). The alpha and beta chains form an alternating ring which encloses part of the gamma chain. CF(1) is attached to CF(0) by a central stalk formed by the gamma and epsilon chains, while a peripheral stalk is formed by the delta and b chains.

The protein localises to the cell inner membrane. The enzyme catalyses ATP + H2O + 4 H(+)(in) = ADP + phosphate + 5 H(+)(out). Produces ATP from ADP in the presence of a proton gradient across the membrane. The catalytic sites are hosted primarily by the beta subunits. This is ATP synthase subunit beta 2 from Psychromonas ingrahamii (strain DSM 17664 / CCUG 51855 / 37).